Consider the following 407-residue polypeptide: Probable endo-beta-1,4-glucanase celB (407 aa).

Residues 1-18 (MAQTLAAASLVLVPLVTA) form the signal peptide. N-linked (GlcNAc...) asparagine glycosylation is present at Asn-136. Glu-216 (nucleophile) is an active-site residue. The active-site Proton donor is Glu-221.

This sequence belongs to the glycosyl hydrolase 7 (cellulase C) family.

It is found in the secreted. The catalysed reaction is Endohydrolysis of (1-&gt;4)-beta-D-glucosidic linkages in cellulose, lichenin and cereal beta-D-glucans.. In terms of biological role, has endoglucanase activity on substrates containing beta-1,4 glycosidic bonds, like in carboxymethylcellulose (CMC), hydroxyethylcellulose (HEC) and beta-glucan. Involved in the degradation of complex natural cellulosic substrates. This Aspergillus fumigatus (strain ATCC MYA-4609 / CBS 101355 / FGSC A1100 / Af293) (Neosartorya fumigata) protein is Probable endo-beta-1,4-glucanase celB (celB).